A 241-amino-acid chain; its full sequence is Geranylgeranylglyceryl phosphate synthase (241 aa).

2 residues coordinate Mg(2+): Asp-19 and Ser-46. Residues Tyr-167 to Gly-173, Gly-198 to Gly-199, and Gly-220 to Thr-221 contribute to the sn-glycerol 1-phosphate site.

It belongs to the GGGP/HepGP synthase family. Group II subfamily. The cofactor is Mg(2+).

It is found in the cytoplasm. The catalysed reaction is sn-glycerol 1-phosphate + (2E,6E,10E)-geranylgeranyl diphosphate = sn-3-O-(geranylgeranyl)glycerol 1-phosphate + diphosphate. Its pathway is membrane lipid metabolism; glycerophospholipid metabolism. In terms of biological role, prenyltransferase that catalyzes the transfer of the geranylgeranyl moiety of geranylgeranyl diphosphate (GGPP) to the C3 hydroxyl of sn-glycerol-1-phosphate (G1P). This reaction is the first ether-bond-formation step in the biosynthesis of archaeal membrane lipids. This chain is Geranylgeranylglyceryl phosphate synthase, found in Pyrobaculum calidifontis (strain DSM 21063 / JCM 11548 / VA1).